A 72-amino-acid chain; its full sequence is MKNSESLKEFKKLNSEQITEKIDQLRKDLFDLRFKQATRQLNETHKFKIIKKQVAQLLTLSKNQSASQTTPD.

This sequence belongs to the universal ribosomal protein uL29 family.

The chain is Large ribosomal subunit protein uL29 from Prochlorococcus marinus (strain AS9601).